The sequence spans 955 residues: 2-oxoglutarate dehydrogenase E1 component (955 aa).

It belongs to the alpha-ketoglutarate dehydrogenase family. In terms of assembly, homodimer. Part of the 2-oxoglutarate dehydrogenase (OGDH) complex composed of E1 (2-oxoglutarate dehydrogenase), E2 (dihydrolipoamide succinyltransferase) and E3 (dihydrolipoamide dehydrogenase); the complex contains multiple copies of the three enzymatic components (E1, E2 and E3). The cofactor is thiamine diphosphate.

It carries out the reaction N(6)-[(R)-lipoyl]-L-lysyl-[protein] + 2-oxoglutarate + H(+) = N(6)-[(R)-S(8)-succinyldihydrolipoyl]-L-lysyl-[protein] + CO2. Functionally, E1 component of the 2-oxoglutarate dehydrogenase (OGDH) complex which catalyzes the decarboxylation of 2-oxoglutarate, the first step in the conversion of 2-oxoglutarate to succinyl-CoA and CO(2). This is 2-oxoglutarate dehydrogenase E1 component from Bacillus cereus (strain ATCC 10987 / NRS 248).